Consider the following 867-residue polypeptide: MKHEWNLCPSIFFSIFHICLSVQTNYGPYFFDNGPGSTNGNMALLSLSEDTPVGAYIYALNGSDPDGDPVTFGLTFEPGSKRYFAVDPDNGNVTLIEELDREKQDEIEVIVSISDGINKVSEKVRVLVTDANDESPGFLNTPYIVTVPEDTPPGSSIFKIEAVDKDTGSGGSITYIIQEMHGSKFTIDRHSGVLRIKAGVSLDFEKSRTHFVSVLAKDGGGKLRGKNQVFTSTTTVTINVEDVQDSPPVFVGTPYYGYVYEDTTMGSEVLTVKAYDGDRGNPNTIYYSIVNGSDGAFTINNATGGITVIKTPDELKKEVYELKIQVSEITPEGDKVAHAFTVATVRVVDLNNHPPTFYGENGPQNRFELTMYEHPPEGEILRGLKITVNDSDQGANAKFNLRLVGPGGIFRVVPQTVLNEAQVTIIVENSAGIDYEKFHLFTFKLLAIEVNTPEKFSSTADITIHLLDINDNVPRFSSEYYIARIPENSPGGSNVVAATATDLDSGLWGEIKYSIYGPGSDPFLIHPSTGIIYTQPWASLDAEVTSKYNFYVKAEDTEGKYSLAEVFVTVLDINDHSPEFSENIQEKTLIIGTPVKIEATDHDAEEPNNIVDYSIMQADPSNVFDIDQSTGEIKLKSYIRSLDIIQNITRNKDCKWSVVVQAKDRGSPSFSTTAVVKIDVTEETLLHKGPMAAFLMQSKDNPMKALGVLAGVMAIMVVITIFISTAMFWRNKKSNRVMPLRRIIKRRKNDHPPRTARTEWLKFKKSNNSADKFTIQEMESGPKNENRNNNYQGIPVPPRAPCPPPPPRLMPKVSKTERSLPTVSGSLTPKIIDQQMNERVPSASAALVSELKQMLEKKNAGSSMSFY.

A signal peptide spans 1 to 21 (MKHEWNLCPSIFFSIFHICLS). Residues 22–707 (VQTNYGPYFF…SKDNPMKALG (686 aa)) are Extracellular-facing. Cadherin domains are found at residues 39–138 (NGNM…SPGF), 139–250 (LNTP…PPVF), 251–357 (VGTP…PPTF), 363–476 (PQNR…VPRF), 477–580 (SSEY…SPEF), and 572–692 (DIND…GPMA). The chain crosses the membrane as a helical span at residues 708-728 (VLAGVMAIMVVITIFISTAMF). The Cytoplasmic portion of the chain corresponds to 729–867 (WRNKKSNRVM…KNAGSSMSFY (139 aa)). The interval 777–825 (EMESGPKNENRNNNYQGIPVPPRAPCPPPPPRLMPKVSKTERSLPTVSG) is disordered. The segment covering 795–809 (PVPPRAPCPPPPPRL) has biased composition (pro residues).

As to expression, expressed in photoreceptor cells of the outer nuclear layer of the retina and in the pinal gland.

It localises to the membrane. Potential calcium-dependent cell-adhesion protein. This is Cadherin-related family member 1 (cdhr1) from Xenopus laevis (African clawed frog).